The primary structure comprises 302 residues: 4-hydroxy-tetrahydrodipicolinate synthase (302 aa).

Position 57 (Thr-57) interacts with pyruvate. Catalysis depends on Tyr-145, which acts as the Proton donor/acceptor. Lys-173 functions as the Schiff-base intermediate with substrate in the catalytic mechanism. Ile-213 serves as a coordination point for pyruvate.

Belongs to the DapA family. As to quaternary structure, homotetramer; dimer of dimers.

It localises to the cytoplasm. The enzyme catalyses L-aspartate 4-semialdehyde + pyruvate = (2S,4S)-4-hydroxy-2,3,4,5-tetrahydrodipicolinate + H2O + H(+). It functions in the pathway amino-acid biosynthesis; L-lysine biosynthesis via DAP pathway; (S)-tetrahydrodipicolinate from L-aspartate: step 3/4. Catalyzes the condensation of (S)-aspartate-beta-semialdehyde [(S)-ASA] and pyruvate to 4-hydroxy-tetrahydrodipicolinate (HTPA). The protein is 4-hydroxy-tetrahydrodipicolinate synthase of Mycolicibacterium gilvum (strain PYR-GCK) (Mycobacterium gilvum (strain PYR-GCK)).